Reading from the N-terminus, the 188-residue chain is Succinate-acetate/proton symporter SatP (188 aa).

At 1 to 13 the chain is on the cytoplasmic side; it reads MGNTKLANPAPLG. A helical transmembrane segment spans residues 14–34; that stretch reads LMGFGMTTILLNLHNVGYFAL. Asp-35 is a topological domain (periplasmic). The helical transmembrane segment at 36–56 threads the bilayer; the sequence is GIILAMGIFYGGIAQIFAGLL. Topologically, residues 57–63 are cytoplasmic; sequence EYKKGNT. Residues 64–84 traverse the membrane as a helical segment; sequence FGLTAFTSYGSFWLTLVAILL. The Periplasmic portion of the chain corresponds to 85–97; the sequence is MPKLGLTDAPNAQ. Residues 98-118 traverse the membrane as a helical segment; sequence FLGVYLGLWGVFTLFMFFGTL. Residues 119–122 lie on the Cytoplasmic side of the membrane; that stretch reads KGAR. Residues 123-143 traverse the membrane as a helical segment; it reads VLQFVFFSLTVLFALLAIGNI. At 144–148 the chain is on the periplasmic side; that stretch reads AGNAA. A helical transmembrane segment spans residues 149–169; the sequence is IIHFAGWIGLICGASAIYLAM. Residues 170–188 are Cytoplasmic-facing; that stretch reads GEVLNEQFGRTVLPIGESH.

It belongs to the acetate uptake transporter (AceTr) (TC 2.A.96) family.

Its subcellular location is the cell inner membrane. In terms of biological role, uptake of acetate and succinate. Transport is energetically dependent on the protonmotive force. This is Succinate-acetate/proton symporter SatP (satP) from Escherichia coli O157:H7.